We begin with the raw amino-acid sequence, 213 residues long: Small ribosomal subunit protein uS4 (213 aa).

A disordered region spans residues 16 to 53 (GTDLGLKSGVKPYDVKTKKSARPPGQHGVSRNKSSEYS). A compositionally biased stretch (polar residues) spans 44–53 (VSRNKSSEYS). An S4 RNA-binding domain is found at 97-163 (SRLDNVVYRM…EKSREQLRIK (67 aa)).

This sequence belongs to the universal ribosomal protein uS4 family. As to quaternary structure, part of the 30S ribosomal subunit. Contacts protein S5. The interaction surface between S4 and S5 is involved in control of translational fidelity.

Its function is as follows. One of the primary rRNA binding proteins, it binds directly to 16S rRNA where it nucleates assembly of the body of the 30S subunit. In terms of biological role, with S5 and S12 plays an important role in translational accuracy. The sequence is that of Small ribosomal subunit protein uS4 from Psychrobacter arcticus (strain DSM 17307 / VKM B-2377 / 273-4).